Reading from the N-terminus, the 579-residue chain is UPF0329 protein ECU06_1620 (579 aa).

Disordered stretches follow at residues glutamate 325–alanine 360 and alanine 370–lysine 389. Residues lysine 329 to serine 338 are compositionally biased toward basic residues. Positions lysine 345 to alanine 360 are enriched in acidic residues.

The protein belongs to the UPF0329 family.

This chain is UPF0329 protein ECU06_1620, found in Encephalitozoon cuniculi (strain GB-M1) (Microsporidian parasite).